Reading from the N-terminus, the 272-residue chain is Shikimate dehydrogenase (NADP(+)) (272 aa).

Shikimate contacts are provided by residues 14–16 and Thr61; that span reads SKS. Residue Lys65 is the Proton acceptor of the active site. Glu77 is an NADP(+) binding site. The shikimate site is built by Asn86 and Asp102. NADP(+)-binding positions include 126 to 130, 149 to 154, and Met213; these read GAGGA and NRTVSR. Tyr215 lines the shikimate pocket. Gly237 serves as a coordination point for NADP(+).

It belongs to the shikimate dehydrogenase family. Homodimer.

The catalysed reaction is shikimate + NADP(+) = 3-dehydroshikimate + NADPH + H(+). The protein operates within metabolic intermediate biosynthesis; chorismate biosynthesis; chorismate from D-erythrose 4-phosphate and phosphoenolpyruvate: step 4/7. Its function is as follows. Involved in the biosynthesis of the chorismate, which leads to the biosynthesis of aromatic amino acids. Catalyzes the reversible NADPH linked reduction of 3-dehydroshikimate (DHSA) to yield shikimate (SA). In Shigella flexneri, this protein is Shikimate dehydrogenase (NADP(+)).